Consider the following 134-residue polypeptide: uncharacterized protein (134 aa).

3 helical membrane passes run 26 to 46 (VAVFLVRAVILLIFAAFGNIG), 55 to 75 (LLKFSIINIIMLLFGIAQIIV), and 101 to 121 (YAPMILLLAVNLCGAVFGLIL).

It localises to the membrane. This is an uncharacterized protein from Dictyostelium discoideum (Social amoeba).